A 165-amino-acid chain; its full sequence is MEMVFYPNDLLRVKTKQIENIDDKIRDYAKKMIELMDISGGVGLAAPQVGLDLALFVVRENKMARPLVFINPSIIETSYEFSSYKEGCLSIPGVYYDLMRPKAVVINFHDENGKSFTIENSDFLARIIQHEMDHLNGVLFIDYYEEKLKNKLLKPYMRERGLKAK.

The Fe cation site is built by Cys-88 and His-130. Glu-131 is an active-site residue. Residue His-134 coordinates Fe cation.

It belongs to the polypeptide deformylase family. Fe(2+) serves as cofactor.

The enzyme catalyses N-terminal N-formyl-L-methionyl-[peptide] + H2O = N-terminal L-methionyl-[peptide] + formate. In terms of biological role, removes the formyl group from the N-terminal Met of newly synthesized proteins. Requires at least a dipeptide for an efficient rate of reaction. N-terminal L-methionine is a prerequisite for activity but the enzyme has broad specificity at other positions. The protein is Peptide deformylase of Borreliella burgdorferi (strain ATCC 35210 / DSM 4680 / CIP 102532 / B31) (Borrelia burgdorferi).